The sequence spans 179 residues: Signal peptidase complex catalytic subunit SEC11A (179 aa).

The Cytoplasmic portion of the chain corresponds to 1-16 (MLSLDFLDDVRRMNKR). The chain crosses the membrane as a helical; Signal-anchor for type II membrane protein span at residues 17-36 (QLYYQVLNFGMIVSSALMIW). Residues 37-179 (KGLMLITGSE…LGLFVLVHRE (143 aa)) are Lumenal-facing. Active-site charge relay system residues include serine 56, histidine 96, and aspartate 122. The segment at 165–176 (AVLFLLGLFVLV) is C-terminal short (CTS) helix.

The protein belongs to the peptidase S26B family. In terms of assembly, component of the signal peptidase complex paralog A (SPC-A) composed of a catalytic subunit SEC11A and three accessory subunits SPCS1, SPCS2 and SPCS3. Within the complex, interacts with SPCS2 and SPCS3. The complex induces a local thinning of the ER membrane which is used to measure the length of the signal peptide (SP) h-region of protein substrates. This ensures the selectivity of the complex towards h-regions shorter than 18-20 amino acids.

It localises to the endoplasmic reticulum membrane. It carries out the reaction Cleavage of hydrophobic, N-terminal signal or leader sequences from secreted and periplasmic proteins.. Its function is as follows. Catalytic component of the signal peptidase complex (SPC) which catalyzes the cleavage of N-terminal signal sequences from nascent proteins as they are translocated into the lumen of the endoplasmic reticulum. Specifically cleaves N-terminal signal peptides that contain a hydrophobic alpha-helix (h-region) shorter than 18-20 amino acids. The protein is Signal peptidase complex catalytic subunit SEC11A (Sec11a) of Rattus norvegicus (Rat).